Here is a 158-residue protein sequence, read N- to C-terminus: Pyruvoyl-dependent arginine decarboxylase (158 aa).

Position 44 is a pyruvic acid (Ser) (Ser-44).

The protein belongs to the PdaD family. The cofactor is pyruvate.

It catalyses the reaction L-arginine + H(+) = agmatine + CO2. The protein is Pyruvoyl-dependent arginine decarboxylase of Thermococcus sibiricus (strain DSM 12597 / MM 739).